We begin with the raw amino-acid sequence, 630 residues long: MSGSCAAAEEKEGSRQRLQMKVNEYKENQNMSSVSLRSIQKTVLEKTVKVCLVPFSLSNYKSGQFKLPKSLLDKNSKNEVACKKYKKTEIKKACTRILTSKMEATASSKAESTLQKSSIDVHTENNQRQHKSTSDTVSLGVDTESSQDGDSDEDTTSSLDDFSGLSPYERKRLKNISENANFFASLQLSESAARLREMIEKRQPPETKRKKPKKKENETGCRRSMRLLNVDPSGVSLPVTPTEPTLVADENPLLPPGPLEMIPENRDDNSELFKEFLQTWAEVSKTSSKNIEKELSSLKTYKANLSGMVISEDTVYKVTKGAIFSIAFHPSEIKTLVAAGAKSGQVGLWDLTHQPKEDGVYVFQPHSQPVSCLYFSPANPAHMLSLSYDGTLRCGDISSAVFEEVYRNERSSLSSFDFLAEDASTFIVGHWDGSISLVDRRTPGASYEKLISSSLRKIRTVHVHPVQRQYFITAGLRDTHIYDARRLTPSGSQPLISLTEHTKSIASAYFSPLTGNRIVTTCADCKLRFFDSSCISSQIPLLTTIRHNTITGRWLTRLRAVWDPKQEDCVIIGSMAHPRQVEIFHETGEQVHSFLGGECLVSVCSINAVHPTRYILAGGNSSGKIHVFMN.

Residues 105-118 are compositionally biased toward polar residues; it reads TASSKAESTLQKSS. Disordered regions lie at residues 105 to 165, 199 to 219, and 231 to 252; these read TASS…FSGL, IEKRQPPETKRKKPKKKENET, and DPSGVSLPVTPTEPTLVADENP. Over residues 145–155 the composition is skewed to acidic residues; the sequence is SSQDGDSDEDT. WD repeat units follow at residues 318 to 359, 365 to 405, 408 to 448, 453 to 492, 500 to 540, 542 to 572, and 598 to 630; these read VTKG…KEDG, PHSQ…FEEV, NERS…ASYE, SSLRKIRTVHVHPVQRQYFITAGLRDTHIYDARRLTPSGS, EHTK…SQIP, LTTIRHNTITGRWLTRLRAVWDPKQEDCVII, and ECLVSVCSINAVHPTRYILAGGNSSGKIHVFMN.

It belongs to the WD repeat DDB2/WDR76 family. As to quaternary structure, interacts with CUL4A and/or CUL4B.

In terms of biological role, specifically binds 5-hydroxymethylcytosine (5hmC), suggesting that it acts as a specific reader of 5hmC. This Rhinolophus ferrumequinum (Greater horseshoe bat) protein is WD repeat-containing protein 76 (WDR76).